Here is a 180-residue protein sequence, read N- to C-terminus: Acireductone dioxygenase (180 aa).

Fe(2+) contacts are provided by histidine 88, histidine 90, glutamate 94, and histidine 133. Residues histidine 88, histidine 90, glutamate 94, and histidine 133 each coordinate Ni(2+).

Belongs to the acireductone dioxygenase (ARD) family. As to quaternary structure, monomer. Interacts with MMP14. Requires Fe(2+) as cofactor. It depends on Ni(2+) as a cofactor.

It localises to the cytoplasm. It is found in the nucleus. Its subcellular location is the cell membrane. It catalyses the reaction 1,2-dihydroxy-5-(methylsulfanyl)pent-1-en-3-one + O2 = 4-methylsulfanyl-2-oxobutanoate + formate + 2 H(+). It carries out the reaction 1,2-dihydroxy-5-(methylsulfanyl)pent-1-en-3-one + O2 = 3-(methylsulfanyl)propanoate + CO + formate + 2 H(+). It participates in amino-acid biosynthesis; L-methionine biosynthesis via salvage pathway; L-methionine from S-methyl-5-thio-alpha-D-ribose 1-phosphate: step 5/6. In terms of biological role, catalyzes 2 different reactions between oxygen and the acireductone 1,2-dihydroxy-3-keto-5-methylthiopentene (DHK-MTPene) depending upon the metal bound in the active site. Fe-containing acireductone dioxygenase (Fe-ARD) produces formate and 2-keto-4-methylthiobutyrate (KMTB), the alpha-ketoacid precursor of methionine in the methionine recycle pathway. Ni-containing acireductone dioxygenase (Ni-ARD) produces methylthiopropionate, carbon monoxide and formate, and does not lie on the methionine recycle pathway. This is Acireductone dioxygenase from Gallus gallus (Chicken).